Reading from the N-terminus, the 60-residue chain is Large ribosomal subunit protein uL30 (60 aa).

It belongs to the universal ribosomal protein uL30 family. As to quaternary structure, part of the 50S ribosomal subunit.

In Symbiobacterium thermophilum (strain DSM 24528 / JCM 14929 / IAM 14863 / T), this protein is Large ribosomal subunit protein uL30.